The sequence spans 353 residues: MTIALGKFTKDENDLFDIMDDWLRRDRFVFVGWSGLLLFPCAYFAVGGWFTGTTFVTSWYTHGLASSYLEGCNFLTAAVSTPANSLAHSLLLLWGPEAQGDFTRWCQLGGLWTFVALHGAFGLIGFMLRQFELARSVQLRPYNAIAFSGPIAVFVSVFLIYPLGQSGWFFAPSFGVAAIFRFILFFQGFHNWTLNPFHMMGVAGVLGAALLCAIHGATVENTLFEDGDGANTFRAFNPTQAEETYSMVTANRFWSQIFGVAFSNKRWLHFFMLFVPVTGLWMSALGVVGLALNLRAYDFVSQEIRAAEDPEFETFYTKNILLNEGIRAWMAAQDQPHENLIFPEEVLPRGNAL.

An N-acetylthreonine modification is found at Thr-2. The residue at position 2 (Thr-2) is a Phosphothreonine. Residues 41 to 61 (CAYFAVGGWFTGTTFVTSWYT) form a helical membrane-spanning segment. His-118 provides a ligand contact to chlorophyll a. The helical transmembrane segment at 125 to 141 (GFMLRQFELARSVQLRP) threads the bilayer. Pheophytin a-binding residues include Gln-130 and Asn-143. Residues 153–166 (VFVSVFLIYPLGQS) form a helical membrane-spanning segment. Residue His-198 participates in chlorophyll a binding. A helical membrane pass occupies residues 208–228 (AALLCAIHGATVENTLFEDGD). Positions 215 and 262 each coordinate a plastoquinone. Fe cation is bound at residue His-215. Residue His-269 participates in Fe cation binding. A helical membrane pass occupies residues 279-295 (GLWMSALGVVGLALNLR).

Belongs to the reaction center PufL/M/PsbA/D family. PSII is composed of 1 copy each of membrane proteins PsbA, PsbB, PsbC, PsbD, PsbE, PsbF, PsbH, PsbI, PsbJ, PsbK, PsbL, PsbM, PsbT, PsbX, PsbY, PsbZ, Psb30/Ycf12, at least 3 peripheral proteins of the oxygen-evolving complex and a large number of cofactors. It forms dimeric complexes. It depends on The D1/D2 heterodimer binds P680, chlorophylls that are the primary electron donor of PSII, and subsequent electron acceptors. It shares a non-heme iron and each subunit binds pheophytin, quinone, additional chlorophylls, carotenoids and lipids. There is also a Cl(-1) ion associated with D1 and D2, which is required for oxygen evolution. The PSII complex binds additional chlorophylls, carotenoids and specific lipids. as a cofactor.

It localises to the plastid. Its subcellular location is the chloroplast thylakoid membrane. It catalyses the reaction 2 a plastoquinone + 4 hnu + 2 H2O = 2 a plastoquinol + O2. Photosystem II (PSII) is a light-driven water:plastoquinone oxidoreductase that uses light energy to abstract electrons from H(2)O, generating O(2) and a proton gradient subsequently used for ATP formation. It consists of a core antenna complex that captures photons, and an electron transfer chain that converts photonic excitation into a charge separation. The D1/D2 (PsbA/PsbD) reaction center heterodimer binds P680, the primary electron donor of PSII as well as several subsequent electron acceptors. D2 is needed for assembly of a stable PSII complex. In Nicotiana tabacum (Common tobacco), this protein is Photosystem II D2 protein.